A 23-amino-acid polypeptide reads, in one-letter code: GPSTDLVIGNKGFDGGIDSAILR.

Belongs to the multicopper oxidase family. Requires Cu cation as cofactor.

Its subcellular location is the secreted. It catalyses the reaction 4 hydroquinone + O2 = 4 benzosemiquinone + 2 H2O. With respect to regulation, strongly inhibited by sodium azide, sodium cyanide, Li(+), Sn(+), Hg(2+), and the disulfide-reducing agents beta-mercaptoethanol, dithiothreitol and thioglycolic acid. Moderately inhibited by Mn(2+) and Fe(2+), inhibition by these metal ions is stronger at 0.1 mM than at 1 mM. Moderately inhibited by Cu(2+). Lignin degradation and detoxification of lignin-derived products. Demethylates eucalyptus hard wood lignin. Has high activity against the non-phenolic heterocyclic compound ABTS, and lower activity against the phenolic substrates syringic acid, caffeic acid, syringaldazine, vanillic acid, catechol and levodihydroxyphenylalanine. The protein is Laccase-1 of Galerina sp.